The primary structure comprises 189 residues: Ornithine decarboxylase antizyme 2 (189 aa).

Ser-186 carries the post-translational modification Phosphoserine.

The protein belongs to the ODC antizyme family. Interacts with ODC1 and thereby sterically blocks ODC homodimerization. Interacts with AZIN2; this interaction disrupts the interaction between the antizyme and ODC1.

It localises to the nucleus. Its function is as follows. Ornithine decarboxylase (ODC) antizyme protein that negatively regulates ODC activity and intracellular polyamine biosynthesis and uptake in response to increased intracellular polyamine levels. Binds to ODC monomers, inhibiting the assembly of the functional ODC homodimers. Does not target the ODC monomers for degradation, which allows a protein synthesis-independent restoration of ODC activity. Involved in the translocation of AZIN2 from ER-Golgi intermediate compartment (ERGIC) to the cytosol. In Homo sapiens (Human), this protein is Ornithine decarboxylase antizyme 2 (OAZ2).